The chain runs to 493 residues: Cardiolipin synthase 1 (493 aa).

Transmembrane regions (helical) follow at residues 13 to 33 and 45 to 65; these read FTIILAIGFIINLVLAFIIIF and WAWLFVLFVLPLIGFILYLFF. PLD phosphodiesterase domains are found at residues 228–255 and 406–433; these read MNNRNHRKIIVIDGQLGYVGGFNIGDEY and ENGFIHSKMCLIDDEIVSVGTANMDFRS. Residues histidine 233, lysine 235, aspartate 240, histidine 411, lysine 413, and aspartate 418 contribute to the active site.

It belongs to the phospholipase D family. Cardiolipin synthase subfamily.

It is found in the cell membrane. It carries out the reaction 2 a 1,2-diacyl-sn-glycero-3-phospho-(1'-sn-glycerol) = a cardiolipin + glycerol. Its function is as follows. Catalyzes the reversible phosphatidyl group transfer from one phosphatidylglycerol molecule to another to form cardiolipin (CL) (diphosphatidylglycerol) and glycerol. The polypeptide is Cardiolipin synthase 1 (cls1) (Staphylococcus aureus (strain COL)).